Here is a 777-residue protein sequence, read N- to C-terminus: Zinc finger protein 786 (777 aa).

Residues 9–80 enclose the KRAB domain; sequence LTFEDVAIYF…WGEKKKPDKE (72 aa). Residues 194–216 form a C2H2-type 1; degenerate zinc finger; that stretch reads NSCPVCRENSWEKNHLVKQQKGH. The C2H2-type 2 zinc finger occupies 240 to 262; the sequence is ISCLGCGKSFRLKQYLVRHLDIH. Residues 268–291 form a C2H2-type 3; degenerate zinc finger; it reads PQCPKCKMCFHHERTLFSHHLKNS. The C2H2-type 4; degenerate zinc-finger motif lies at 420–442; sequence VFCRKCGQGFTKHCGLTEHTRIL. 11 C2H2-type zinc fingers span residues 448–470, 476–498, 504–526, 532–554, 560–582, 588–610, 616–638, 644–665, 671–693, 699–721, and 727–749; these read FWCA…QRLH, FQCT…QLQH, FSCS…LRVH, FQCP…QRIH, FSCG…FRVH, FQCP…QRLH, FQCP…QLLH, FSCQ…MRTH, FQCP…QGLH, FHCP…QRIH, and FACG…IRVH.

Belongs to the krueppel C2H2-type zinc-finger protein family.

The protein resides in the nucleus. Functionally, may be involved in transcriptional regulation. The polypeptide is Zinc finger protein 786 (Znf786) (Mus musculus (Mouse)).